Reading from the N-terminus, the 290-residue chain is RxLR effector protein Avr4 (290 aa).

The signal sequence occupies residues 1 to 24 (MRSLHILLVITASLLASLAVSAEA). The tract at residues 33–56 (VVENNKDKSRFLRDGGTTEAQTDE) is disordered. The segment covering 36 to 45 (NNKDKSRFLR) has biased composition (basic and acidic residues). Positions 42 to 58 (RFLRDGGTTEAQTDEER) match the RxLR-dEER motif. The tract at residues 118 to 141 (KYERMQWQKLNEGQTLTYMRVGDR) is W1 motif. A W2 motif region spans residues 151 to 174 (QLLRWVAQKKTVKSVYDDLQIEGF). The W3 motif stretch occupies residues 224-247 (VFEKWAMEGTHIKSVIKTLNLNNK). N-linked (GlcNAc...) asparagine glycosylation is present at Asn-246. A y motif region spans residues 249 to 270 (ASEMANNENFPALLKYVKLYLD).

This sequence belongs to the RxLR effector family.

The protein localises to the secreted. It localises to the host cytoplasm. Its subcellular location is the host nucleus. The protein resides in the host nucleolus. It is found in the host cytoskeleton. Secreted effector that acts as an elicitor of hypersensitive response (HR) specifically on plants carrying defense protein R4, through its interaction with this protein. The sequence is that of RxLR effector protein Avr4 from Phytophthora mirabilis.